The sequence spans 268 residues: Phosphate import ATP-binding protein PstB 3 (268 aa).

The ABC transporter domain maps to 15-254 (LRTENLNVYY…DATESIFNNP (240 aa)). Position 47-54 (47-54 (GPSGCGKS)) interacts with ATP.

Belongs to the ABC transporter superfamily. Phosphate importer (TC 3.A.1.7) family. As to quaternary structure, the complex is composed of two ATP-binding proteins (PstB), two transmembrane proteins (PstC and PstA) and a solute-binding protein (PstS).

The protein resides in the cell inner membrane. The catalysed reaction is phosphate(out) + ATP + H2O = ADP + 2 phosphate(in) + H(+). In terms of biological role, part of the ABC transporter complex PstSACB involved in phosphate import. Responsible for energy coupling to the transport system. The chain is Phosphate import ATP-binding protein PstB 3 from Nostoc sp. (strain PCC 7120 / SAG 25.82 / UTEX 2576).